Reading from the N-terminus, the 957-residue chain is Outer kinetochore KNL1 complex subunit knl-1 (957 aa).

Repeat 1 spans residues Met87–Thr90. An 8 X 4 AA repeats of M-[D/E]-[I/L/M]-[S/T] region spans residues Met87–Thr393. The disordered stretch occupies residues Ile89–Met111. Positions Gly91 to Asn106 are enriched in polar residues. 7 tandem repeats follow at residues Met109 to Ser112, Met206 to Thr209, Met251 to Thr254, Met282 to Thr285, Met326 to Thr329, Met367 to Thr370, and Met390 to Thr393. The tract at residues Ser476–Ser504 is disordered. Residues Lys830–Arg950 are a coiled coil.

In terms of assembly, component of the KNL1 complex composed of knl-1 and kbp-5. Part of the ten-subunit outer kinetochore KMN network that includes the KNL1, MIS12 and NDC80 complexes. Interacts with the protein phosphatase 1 (PP1) catalytic subunit gsp-1; the interaction is direct. Interacts with the protein phosphatase 1 (PP1) catalytic subunit gsp-2; the interaction is direct. Interacts with the MIS12 complex subunits kbp-1, kbp-2 and mis-12. Interacts with the NDC80 complex components ndc-80 and him-10. Interacts with knl-3. Interacts with kbp-3. Interacts with kbp-4. Interacts with kbp-5.

The protein localises to the cytoplasm. Its subcellular location is the cell cortex. It localises to the chromosome. The protein resides in the centromere. It is found in the kinetochore. In terms of biological role, acts as a component of the outer kinetochore KNL1 complex that serves as a docking point for spindle assembly checkpoint components and mediates microtubule-kinetochore interactions. Kinetochores, consisting of a centromere-associated inner segment and a microtubule-contacting outer segment, play a crucial role in chromosome segregation by mediating the physical connection between centromeric DNA and spindle microtubules. The outer kinetochore is made up of the ten-subunit KMN network, comprising the MIS12, NDC80 and KNL1 complexes, and auxiliary microtubule-associated components; together they connect the outer kinetochore with the inner kinetochore, bind microtubules, and mediate interactions with mitotic checkpoint proteins that delay anaphase until chromosomes are bioriented on the spindle. Binds the protein phosphatase 1 catalytic subunits gsp-1 and gsp-2, which has a role in delaying formation of load-bearing kinetochore-microtubule attachments. Required for the recruitment of spindle-assembly checkpoint components bub-1 and mdf-1/2 to unattached kinetochores. Binds microtubules which plays a role in silencing of the spindle assembly checkpoint, but not the formation of load-bearing microtubule-kinetochore attachments. Has a role in the correct localization of the spindly-like protein spdl-1 and the RZZ complex that is composed of rod-1, czw-1 and zwl-1 to kinetochores. The chain is Outer kinetochore KNL1 complex subunit knl-1 from Caenorhabditis briggsae.